Consider the following 120-residue polypeptide: U13-lycotoxin-Ls1a (120 aa).

Residues 1–16 (MKILFVLISILYAVYC) form the signal peptide. The propeptide occupies 17–54 (FSSEEDVDSAYLANELEPVEDINSEQYAALEPKEEQGR). 4 disulfides stabilise this stretch: Cys-56/Cys-70, Cys-63/Cys-76, Cys-69/Cys-87, and Cys-78/Cys-85. Positions 56–95 (CADMGQDCKDDCDCCLNIATCNCWFGRYFCSCTFGDYQTC) constitute an Agouti domain.

Belongs to the neurotoxin 05 (agouti) family. Contains 6 disulfide bonds. As to expression, expressed by the venom gland.

It is found in the secreted. This chain is U13-lycotoxin-Ls1a, found in Lycosa singoriensis (Wolf spider).